A 466-amino-acid polypeptide reads, in one-letter code: Ras GTPase-activating protein-binding protein 1 (466 aa).

An NTF2 domain is found at 11–133 (VGREFVRQYY…FYVHNDIFRY (123 aa)). Glycyl lysine isopeptide (Lys-Gly) (interchain with G-Cter in ubiquitin) cross-links involve residues lysine 36, lysine 50, lysine 59, lysine 64, lysine 76, and lysine 123. Positions 142-225 (VTEPQEESEE…EPVLEETAPE (84 aa)) are acidic disordered region. Residue threonine 143 is modified to Phosphothreonine. Disordered regions lie at residues 144-172 (EPQE…DSGT) and 184-243 (EEHL…QTVQ). Composition is skewed to acidic residues over residues 145–157 (PQEE…EEPE) and 185–206 (EHLE…EQEP). Serine 149 carries the post-translational modification Phosphoserine. Residues serine 231, serine 232, serine 250, and serine 253 each carry the phosphoserine modification. The tract at residues 255–329 (TSKNLPPSGA…REAGEQGDIE (75 aa)) is disordered. Basic and acidic residues-rich tracts occupy residues 297 to 307 (PQRDQRVREQR) and 318 to 329 (PIREAGEQGDIE). Positions 340–415 (HQLFIGNLPH…VRLNVEEKKT (76 aa)) constitute an RRM domain. Glycyl lysine isopeptide (Lys-Gly) (interchain with G-Cter in ubiquitin) cross-links involve residues lysine 353 and lysine 357. Phosphoserine is present on serine 373. Lysine 376 participates in a covalent cross-link: Glycyl lysine isopeptide (Lys-Gly) (interchain with G-Cter in ubiquitin). The residue at position 376 (lysine 376) is an N6-acetyllysine; alternate. Residue lysine 376 forms a Glycyl lysine isopeptide (Lys-Gly) (interchain with G-Cter in SUMO2); alternate linkage. A Glycyl lysine isopeptide (Lys-Gly) (interchain with G-Cter in ubiquitin); alternate cross-link involves residue lysine 393. Positions 410–466 (VEEKKTRAAREGDRRDNRLRGPGGPRGGLGGGMRGPPRGGMVQKPGFGVGRGLAPRQ) are RG-rich region. Basic and acidic residues predominate over residues 413-428 (KKTRAAREGDRRDNRL). Residues 413–466 (KKTRAAREGDRRDNRLRGPGGPRGGLGGGMRGPPRGGMVQKPGFGVGRGLAPRQ) form a disordered region. Position 429 is an asymmetric dimethylarginine (arginine 429). Residues 430-447 (GPGGPRGGLGGGMRGPPR) show a composition bias toward gly residues. Arginine 435 is subject to Asymmetric dimethylarginine; alternate. Position 435 is a dimethylated arginine; alternate (arginine 435). Arginine 435 bears the Omega-N-methylarginine; alternate mark. At arginine 447 the chain carries Omega-N-methylarginine. The residue at position 460 (arginine 460) is a Dimethylated arginine; alternate. Arginine 460 is subject to Omega-N-methylarginine; alternate. An Omega-N-methylarginine modification is found at arginine 465.

As to quaternary structure, homodimer and oligomer. Component of a TAU mRNP complex, at least composed of IGF2BP1, ELAVL4 and G3BP1. Binds to the SH3 domain of Ras GTPase-activating protein (RASA1) in proliferating cells. No interaction in quiescent cells. Interacts (via NTF2 domain) with USP10; inhibiting stress granule formation by lowering G3BP1 valence. Interacts (via NTF2 domain) with CAPRIN1; promoting stress granule formation by lowering the saturation-concentration of G3BP1. Interacts (via NTF2 domain) with UBAP2L; promoting stress granule formation. Associates (via RG-rich region) with 40S ribosome subunits. Interacts with RPTOR and SPAG5; this complex is increased by oxidative stress. Interacts with ATXN2L. Interacts with STYXL1. Interacts with CGAS (via N-terminus); this interaction promotes the DNA-binding and activation of CGAS. Interacts (via C-terminus) with RIGI. Interacts with PABPC1. Interacts with QKI (isoforms QKI6 and QKI7); directing N(7)-methylguanine-containing mRNAs to stress granules. In terms of assembly, (Microbial infection) Interacts with Semliki forest virus non-structural protein 3 (via C-terminus); this interaction inhibits the formation of stress granules on viral mRNAs and the nsp3-G3BP1 complexes bind viral RNAs and probably orchestrate the assembly of viral replication complexes. (Microbial infection) Interacts with Chikungunya virus non-structural protein 3 (via C-terminus); this interaction inhibits the formation of stress granules on viral mRNAs and the nsp3-G3BP1 complexes bind viral RNAs and probably orchestrate the assembly of viral replication complexes. As to quaternary structure, (Microbial infection) Interacts with Sindbis virus non-structural protein 3 (via C-terminus); this interaction inhibits the formation of stress granules on viral mRNAs and the nsp3-G3BP1 complexes bind viral RNAs and probably orchestrate the assembly of viral replication complexes. In terms of assembly, (Microbial infection) Interacts with Zika virus capsid protein C; this interaction is probably linked to the inhibition of stress granules formation by the virus. (Microbial infection) Interacts with reovirus type 2 protein sigma-NS; this interaction induces the relocalization of G3BP1 to the outer periphery of sigma-NS/mu-Ns viral factories and is probably involved in the suppression of the integrated stress response by the virus. As to quaternary structure, (Microbial infection) Interacts with SARS-CoV-2 N protein; the interaction is enhanced by host HDAC6 which deacetylates the viral N protein and promotes N protein association with G3BP1, disrupting stress granule formation and facilitating viral replication. Interacts with HDAC6; the interaction increases during SARS-CoV-2 infection. Mg(2+) is required as a cofactor. Post-translationally, phosphorylation of the acidic disordered region regulates stress granule assembly. RASA1-dependent phosphorylation of Ser-149 induces a conformational change that prevents self-association. Dephosphorylation after HRAS activation is required for stress granule assembly. Ser-149 phosphorylation induces partial nuclear localization. Ubiquitinated by TRIM21 via 'Lys-63'-linked polyubiquitination in the NTF2 domain in response to heat shock, leading to stress granule disassembly: ubiquitination promotes interaction with the FAF2 adapter, followed by interaction with VCP, which extracts G3BP1 from stress granules, leading to stress granule disassembly. In case of prolonged stress, ubiquitination by TRIM21 leads to autophagy-dependent degradation of G3BP1 via recruitment of ubiquitinated G3BP1 by SQSTM1 and/or CALCOCO2 to autophagosomes. In terms of processing, (Microbial infection) Cleaved by human enterovirus 71; this cleavage induces the disassembly of cytoplasmic stress granules. Cleaved by Foot-and-mouth disease virus; this cleavage suppresses the formation of cytoplasmic stress granules. Post-translationally, arg-435 is dimethylated, probably to asymmetric dimethylarginine. (Microbial infection) Cleaved by Encephalomyocarditis virus protease 3C; this cleavage suppresses the formation of cytoplasmic stress granules. In terms of tissue distribution, ubiquitous.

It localises to the cytoplasm. It is found in the cytosol. The protein localises to the perikaryon. Its subcellular location is the stress granule. The protein resides in the nucleus. The enzyme catalyses ATP + H2O = ADP + phosphate + H(+). Its activity is regulated as follows. Under physiological conditions, G3BP1 adopts a compact state that is stabilized by intramolecular interactions between the RG-rich and the acidic regions that inhibit phase separation. Upon stress, polysomes disassemble and mRNAs are released in an unfolded protein-free state. Binding of unfolded mRNA to G3BP1 outcompetes the intramolecular interactions and RNA-bound G3BP1 adopts an expanded conformation in which the RG-rich region becomes exposed to engage in protein-protein and protein-RNA interactions, allowing physical cross-linking of RNA molecules to form protein-RNA condensates, leading to liquid-liquid phase separation (LLPS). Functionally, protein involved in various processes, such as stress granule formation and innate immunity. Plays an essential role in stress granule formation. Stress granules are membraneless compartments that store mRNAs and proteins, such as stalled translation pre-initiation complexes, in response to stress. Promotes formation of stress granules phase-separated membraneless compartment by undergoing liquid-liquid phase separation (LLPS) upon unfolded RNA-binding: functions as a molecular switch that triggers RNA-dependent LLPS in response to a rise in intracellular free RNA concentrations. Also acts as an ATP- and magnesium-dependent helicase: unwinds DNA/DNA, RNA/DNA, and RNA/RNA substrates with comparable efficiency. Acts unidirectionally by moving in the 5' to 3' direction along the bound single-stranded DNA. Unwinds preferentially partial DNA and RNA duplexes having a 17 bp annealed portion and either a hanging 3' tail or hanging tails at both 5'- and 3'-ends. Plays an essential role in innate immunity by promoting CGAS and RIGI activity. Participates in the DNA-triggered cGAS/STING pathway by promoting the DNA binding and activation of CGAS. Triggers the condensation of cGAS, a process probably linked to the formation of membrane-less organelles. Also enhances RIGI-induced type I interferon production probably by helping RIGI at sensing pathogenic RNA. May also act as a phosphorylation-dependent sequence-specific endoribonuclease in vitro: Cleaves exclusively between cytosine and adenine and cleaves MYC mRNA preferentially at the 3'-UTR. The chain is Ras GTPase-activating protein-binding protein 1 from Homo sapiens (Human).